The following is a 904-amino-acid chain: DNA mismatch repair protein MutS (904 aa).

654–661 (GPNMAGKS) is an ATP binding site.

It belongs to the DNA mismatch repair MutS family.

Functionally, this protein is involved in the repair of mismatches in DNA. It is possible that it carries out the mismatch recognition step. This protein has a weak ATPase activity. The chain is DNA mismatch repair protein MutS from Caulobacter sp. (strain K31).